The primary structure comprises 432 residues: Trigger factor (432 aa).

The region spanning 161–246 is the PPIase FKBP-type domain; the sequence is EDRVTIDFTG…LKKVEERELP (86 aa).

This sequence belongs to the FKBP-type PPIase family. Tig subfamily. As to quaternary structure, homodimer and monomer. In vivo most of the ribosomes are in complex with monomeric TF. Uncomplexed TF, however, is in a monomer-dimer equilibrium with approximately two thirds of TF existing in a dimeric state.

It is found in the cytoplasm. The catalysed reaction is [protein]-peptidylproline (omega=180) = [protein]-peptidylproline (omega=0). Its function is as follows. Involved in protein export. Acts as a chaperone by maintaining the newly synthesized protein in an open conformation. Functions as a peptidyl-prolyl cis-trans isomerase. The chain is Trigger factor from Escherichia coli O6:K15:H31 (strain 536 / UPEC).